Here is a 560-residue protein sequence, read N- to C-terminus: Oxygen-dependent choline dehydrogenase (560 aa).

FAD is bound at residue 6–35 (DYIIVGAGSAGCVLADRLSESGDHSVLLLE). His470 serves as the catalytic Proton acceptor.

This sequence belongs to the GMC oxidoreductase family. FAD serves as cofactor.

It carries out the reaction choline + A = betaine aldehyde + AH2. It catalyses the reaction betaine aldehyde + NAD(+) + H2O = glycine betaine + NADH + 2 H(+). Its pathway is amine and polyamine biosynthesis; betaine biosynthesis via choline pathway; betaine aldehyde from choline (cytochrome c reductase route): step 1/1. Its function is as follows. Involved in the biosynthesis of the osmoprotectant glycine betaine. Catalyzes the oxidation of choline to betaine aldehyde and betaine aldehyde to glycine betaine at the same rate. The sequence is that of Oxygen-dependent choline dehydrogenase from Vibrio vulnificus (strain YJ016).